Here is a 279-residue protein sequence, read N- to C-terminus: Tryptophan synthase alpha chain (279 aa).

Catalysis depends on proton acceptor residues Glu-50 and Asp-61.

The protein belongs to the TrpA family. As to quaternary structure, tetramer of two alpha and two beta chains.

It catalyses the reaction (1S,2R)-1-C-(indol-3-yl)glycerol 3-phosphate + L-serine = D-glyceraldehyde 3-phosphate + L-tryptophan + H2O. Its pathway is amino-acid biosynthesis; L-tryptophan biosynthesis; L-tryptophan from chorismate: step 5/5. The alpha subunit is responsible for the aldol cleavage of indoleglycerol phosphate to indole and glyceraldehyde 3-phosphate. The polypeptide is Tryptophan synthase alpha chain (Brucella ovis (strain ATCC 25840 / 63/290 / NCTC 10512)).